The following is an 860-amino-acid chain: MEPGRNQLFVVILLTSACLVYCSQYVTVFYGIPAWKNASIPLFCATKNRDTWGTIQCLPDNDDYQEIILNVTEAFDAWNNTVTEQAVEDVWHLFETSIKPCVKLTPLCVAMNCSRVQGNTTTPNPRTSSSTTSRPPTSAASIINETSNCIENNTCAGLGYEEMMQCEFNMKGLEQDKKRRYKDTWYLEDVVCDNTTAGTCYMRHCNTSIIKESCDKHYWDAMRFRYCAPPGFALLRCNDTNYSGFEPKCTKVVAASCTRMMETQTSTWFGFNGTRAENRTYIYWHGRDNRTIISLNKYYNLTMRCKRPGNKTVLPITLMSGLVFHSQPINTRPRQAWCRFGGRWREAMQEVKQTLVQHPRYKGINDTGKINFTKPGAGSDPEVAFMWTNCRGEFLYCNMTWFLNWVEDKNQTRRNYCHIKQIINTWHKVGKNVYLPPREGELACESTVTSIIANIDIDKNRTHTNITFSAEVAELYRLELGDYKLIEITPIGFAPTDQRRYSSTPVRNKRGVFVLGFLGFLATAGSAMGARSLTLSAQSRTLLAGIVQQQQQLLDVVKRQQEMLRLTVWGTKNLQARVTAIEKYLKHQAQLNSWGCAFRQVCHTTVPWVNDSLSPDWKNMTWQEWEKQVRYLEANISQSLEEAQIQQEKNMYELQKLNSWDILGNWFDLTSWVKYIQYGVHIVVGIIALRIAIYVVQLLSRFRKGYRPVFSSPPGYLQQIHIHKDRGQPANEGTEEDVGGDSGYDLWPWPINYVQFLIHLLTRLLIGLYNICRDLLSKNSPTRRLISQSLTAIRDWLRLKAAQLQYGCEWIQEAFQAFARTTRETLAGAWGWLWEAARRIGRGILAVPRRIRQGAELALL.

Residues Met-1–Cys-22 form the signal peptide. Topologically, residues Ser-23–Tyr-678 are extracellular. Asn-37 carries N-linked (GlcNAc...) asparagine; by host glycosylation. Cys-44 and Cys-57 are joined by a disulfide. 21 N-linked (GlcNAc...) asparagine; by host glycosylation sites follow: Asn-70, Asn-79, Asn-112, Asn-119, Asn-144, Asn-152, Asn-194, Asn-206, Asn-238, Asn-241, Asn-272, Asn-278, Asn-289, Asn-300, Asn-310, Asn-365, Asn-371, Asn-398, Asn-410, Asn-460, and Asn-465. 5 cysteine pairs are disulfide-bonded: Cys-101–Cys-214, Cys-108–Cys-205, Cys-113–Cys-166, Cys-227–Cys-257, and Cys-237–Cys-249. A V1 region spans residues Cys-113–Gln-165. The interval Gly-118–Ala-139 is disordered. The span at Asn-119–Ala-139 shows a compositional bias: low complexity. The interval Cys-166 to Cys-205 is V2. Positions Cys-305–Trp-337 are V3. A disulfide bridge links Cys-305 with Cys-338. 2 disulfide bridges follow: Cys-390–Cys-444 and Cys-397–Cys-417. The V4 stretch occupies residues Cys-397 to Cys-417. The interval Asn-460–Phe-468 is V5. The interval Gly-511–Arg-531 is fusion peptide. An immunosuppression region spans residues Leu-574 to Gln-590. N-linked (GlcNAc...) asparagine; by host glycosylation is found at Asn-610, Asn-619, and Asn-635. Residues Gln-623–Gln-644 adopt a coiled-coil conformation. Residues Lys-656–Gln-677 are MPER; binding to GalCer. Residues Gly-679 to Leu-699 form a helical membrane-spanning segment. At Ser-700 to Leu-860 the chain is on the cytoplasmic side. The short motif at Tyr-706–Val-709 is the YXXV motif; contains endocytosis signal element. Cys-772 carries the S-palmitoyl cysteine; by host lipid modification. The short motif at Leu-859 to Leu-860 is the Di-leucine internalization motif element.

As to quaternary structure, the mature envelope protein (Env) consists of a homotrimer of non-covalently associated gp120-gp41 heterodimers. The resulting complex protrudes from the virus surface as a spike. There seems to be as few as 10 spikes on the average virion. Interacts with human CD4, CCR5 and CXCR4, to form a P4HB/PDI-CD4-CXCR4-gp120 complex. Gp120 also interacts with the C-type lectins CD209/DC-SIGN and CLEC4M/DC-SIGNR (collectively referred to as DC-SIGN(R)). Gp120 and gp41 interact with GalCer. In terms of assembly, the mature envelope protein (Env) consists of a homotrimer of non-covalently associated gp120-gp41 heterodimers. The resulting complex protrudes from the virus surface as a spike. There seems to be as few as 10 spikes on the average virion. In terms of processing, specific enzymatic cleavages in vivo yield mature proteins. Envelope glycoproteins are synthesized as an inactive precursor that is heavily N-glycosylated and processed likely by host cell furin in the Golgi to yield the mature SU and TM proteins. The cleavage site between SU and TM requires the minimal sequence [KR]-X-[KR]-R. Post-translationally, palmitoylation of the transmembrane protein and of Env polyprotein (prior to its proteolytic cleavage) is essential for their association with host cell membrane lipid rafts. Palmitoylation is therefore required for envelope trafficking to classical lipid rafts, but not for viral replication.

The protein resides in the virion membrane. It localises to the host cell membrane. Its subcellular location is the host endosome membrane. In terms of biological role, the surface protein gp120 (SU) attaches the virus to the host lymphoid cell by binding to the primary receptor CD4. This interaction induces a structural rearrangement creating a high affinity binding site for a chemokine coreceptor like CXCR4 and/or CCR5. This peculiar 2 stage receptor-interaction strategy allows gp120 to maintain the highly conserved coreceptor-binding site in a cryptic conformation, protected from neutralizing antibodies. Since CD4 also displays a binding site for the disulfide-isomerase P4HB/PDI, a P4HB/PDI-CD4-CXCR4-gp120 complex may form. In that complex, P4HB/PDI could reach and reduce gp120 disulfide bonds, causing major conformational changes in gp120. TXN, another PDI family member could also be involved in disulfide rearrangements in Env during fusion. These changes are transmitted to the transmembrane protein gp41 and are thought to activate its fusogenic potential by unmasking its fusion peptide. The surface protein gp120 is a ligand for CD209/DC-SIGN and CLEC4M/DC-SIGNR, which are respectively found on dendritic cells (DCs), and on endothelial cells of liver sinusoids and lymph node sinuses. These interactions allow capture of viral particles at mucosal surfaces by these cells and subsequent transmission to permissive cells. DCs are professional antigen presenting cells, critical for host immunity by inducing specific immune responses against a broad variety of pathogens. They act as sentinels in various tissues where they take up antigen, process it, and present it to T-cells following migration to lymphoid organs. HIV subverts the migration properties of dendritic cells to gain access to CD4+ T-cells in lymph nodes. Virus transmission to permissive T-cells occurs either in trans (without DCs infection, through viral capture and transmission), or in cis (following DCs productive infection, through the usual CD4-gp120 interaction), thereby inducing a robust infection. In trans infection, bound virions remain infectious over days and it is proposed that they are not degraded, but protected in non-lysosomal acidic organelles within the DCs close to the cell membrane thus contributing to the viral infectious potential during DCs' migration from the periphery to the lymphoid tissues. On arrival at lymphoid tissues, intact virions recycle back to DCs' cell surface allowing virus transmission to CD4+ T-cells. Virion capture also seems to lead to MHC-II-restricted viral antigen presentation, and probably to the activation of HIV-specific CD4+ cells. Functionally, the transmembrane protein gp41 (TM) acts as a class I viral fusion protein. Under the current model, the protein has at least 3 conformational states: pre-fusion native state, pre-hairpin intermediate state, and post-fusion hairpin state. During fusion of viral and target intracellular membranes, the coiled coil regions (heptad repeats) assume a trimer-of-hairpins structure, positioning the fusion peptide in close proximity to the C-terminal region of the ectodomain. The formation of this structure appears to drive apposition and subsequent fusion of viral and target cell membranes. Complete fusion occurs in host cell endosomes and is dynamin-dependent, however some lipid transfer might occur at the plasma membrane. The virus undergoes clathrin-dependent internalization long before endosomal fusion, thus minimizing the surface exposure of conserved viral epitopes during fusion and reducing the efficacy of inhibitors targeting these epitopes. Membranes fusion leads to delivery of the nucleocapsid into the cytoplasm. Its function is as follows. The envelope glycoprotein gp160 precursor down-modulates cell surface CD4 antigen by interacting with it in the endoplasmic reticulum and blocking its transport to the cell surface. In terms of biological role, the gp120-gp41 heterodimer seems to contribute to T-cell depletion during HIV-1 infection. The envelope glycoproteins expressed on the surface of infected cells induce apoptosis through an interaction with uninfected cells expressing the receptor (CD4) and the coreceptors CXCR4 or CCR5. This type of bystander killing may be obtained by at least three distinct mechanisms. First, the interaction between the 2 cells can induce cellular fusion followed by nuclear fusion within the syncytium. Syncytia are condemned to die from apoptosis. Second, the 2 interacting cells may not fuse entirely and simply exchange plasma membrane lipids, after a sort of hemifusion process, followed by rapid death. Third, it is possible that virus-infected cells, on the point of undergoing apoptosis, fuse with CD4-expressing cells, in which case apoptosis is rapidly transmitted from one cell to the other and thus occurs in a sort of contagious fashion. The gp120-gp41 heterodimer allows rapid transcytosis of the virus through CD4 negative cells such as simple epithelial monolayers of the intestinal, rectal and endocervical epithelial barriers. Both gp120 and gp41 specifically recognize glycosphingolipids galactosyl-ceramide (GalCer) or 3' sulfo-galactosyl-ceramide (GalS) present in the lipid rafts structures of epithelial cells. Binding to these alternative receptors allows the rapid transcytosis of the virus through the epithelial cells. This transcytotic vesicle-mediated transport of virions from the apical side to the basolateral side of the epithelial cells does not involve infection of the cells themselves. In Homo sapiens (Human), this protein is Envelope glycoprotein gp160 (env).